Consider the following 1438-residue polypeptide: DNA polymerase III PolC-type (1438 aa).

In terms of domain architecture, Exonuclease spans 422-578 (YVVFDVETTG…YDTEATAYIF (157 aa)).

The protein belongs to the DNA polymerase type-C family. PolC subfamily.

The protein localises to the cytoplasm. The catalysed reaction is DNA(n) + a 2'-deoxyribonucleoside 5'-triphosphate = DNA(n+1) + diphosphate. Functionally, required for replicative DNA synthesis. This DNA polymerase also exhibits 3' to 5' exonuclease activity. This Staphylococcus aureus (strain MRSA252) protein is DNA polymerase III PolC-type.